A 160-amino-acid polypeptide reads, in one-letter code: Cytochrome c-type biogenesis protein CcmE (160 aa).

The Cytoplasmic portion of the chain corresponds to 1 to 8; the sequence is MNPRRKNR. A helical; Signal-anchor for type II membrane protein transmembrane segment spans residues 9–29; the sequence is LILVMLVLVGLGLATALVMYA. Over 30–160 the chain is Periplasmic; sequence LRSNIDLFYT…AVGDNSVRPS (131 aa). Heme-binding residues include His-130 and Tyr-134. Residues 133–148 are compositionally biased toward basic and acidic residues; it reads KYTPPEIEDAMKKDHP. Residues 133–160 are disordered; it reads KYTPPEIEDAMKKDHPAQAVGDNSVRPS.

This sequence belongs to the CcmE/CycJ family.

The protein localises to the cell inner membrane. Functionally, heme chaperone required for the biogenesis of c-type cytochromes. Transiently binds heme delivered by CcmC and transfers the heme to apo-cytochromes in a process facilitated by CcmF and CcmH. The sequence is that of Cytochrome c-type biogenesis protein CcmE from Erwinia tasmaniensis (strain DSM 17950 / CFBP 7177 / CIP 109463 / NCPPB 4357 / Et1/99).